Here is a 1413-residue protein sequence, read N- to C-terminus: MGSSFRSSSSRNEHEDGGDEAEHALQWAEIQRLPTFKRLRSSLVDKYGEGTEKGKKVVDVTKLGAMERHLMIEKLIKHIENDNLKLLKKIRRRMERVGVEFPSIEVRYEHLGVEAACEVVEGKALPTLWNSLKHVFLDLLKLSGVRTNEANIKILTDVSGIISPGRLTLLLGPPGCGKTTLLKALSGNLENNLKCYGEISYNGHGLNEVVPQKTSAYISQHDLHIAEMTTRETIDFSARCQGVGSRTDIMMEVSKREKDGGIIPDPEIDAYMKAISVKGLKRSLQTDYILKILGLDICAETLVGNAMKRGISGGQKKRLTTAEMIVGPTKALFMDEITNGLDSSTAFQIIKSLQQVAHITNATVFVSLLQPAPESYDLFDDIVLMAEGKIVYHGPRDDVLKFFEECGFQCPERKGVADFLQEVISKKDQGQYWLHQNLPHSFVSVDTLSKRFKDLEIGRKIEEALSKPYDISKTHKDALSFNVYSLPKWELFRACISREFLLMKRNYFVYLFKTFQLVLAAIITMTVFIRTRMDIDIIHGNSYMSCLFFATVVLLVDGIPELSMTVQRLSVFYKQKQLCFYPAWAYAIPATVLKIPLSFFESLVWTCLTYYVIGYTPEPYRFFRQFMILFAVHFTSISMFRCIAAIFQTGVAAMTAGSFVMLITFVFAGFAIPYTDMPGWLKWGFWVNPISYAEIGLSVNEFLAPRWQKMQPTNVTLGRTILESRGLNYDDYMYWVSLSALLGLTIIFNTIFTLALSFLKSPTSSRPMISQDKLSELQGTKDSSVKKNKPLDSSIKTNEDPGKMILPFKPLTITFQDLNYYVDVPVEMKGQGYNEKKLQLLSEITGAFRPGVLTALMGISGAGKTTLLDVLAGRKTSGYIEGEIRISGFLKVQETFARVSGYCEQTDIHSPSITVEESLIYSAWLRLVPEINPQTKIRFVKQVLETIELEEIKDALVGVAGVSGLSTEQRKRLTVAVELVANPSIIFMDEPTTGLDARAAAIVMRAVKNVAETGRTIVCTIHQPSIHIFEAFDELVLLKRGGRMIYSGPLGQHSSCVIEYFQNIPGVAKIRDKYNPATWMLEVTSESVETELDMDFAKIYNESDLYKNNSELVKELSKPDHGSSDLHFKRTFAQNWWEQFKSCLWKMSLSYWRSPSYNLMRIGHTFISSFIFGLLFWNQGKKIDTQQNLFTVLGAIYGLVLFVGINNCTSALQYFETERNVMYRERFAGMYSAFAYALAQVVTEIPYIFIQSAEFVIVIYPMIGFYASFSKVFWSLYAMFCNLLCFNYLAMFLISITPNFMVAAILQSLFFTTFNIFAGFLIPKPQIPKWWVWFYYITPTSWTLNLFFSSQYGDIHQKINAFGETKTVASFLEDYFGFHHDRLMITAIILIAFPIALATMYAFFVAKLNFQKR.

The segment covering 1-10 (MGSSFRSSSS) has biased composition (low complexity). The disordered stretch occupies residues 1–21 (MGSSFRSSSSRNEHEDGGDEA). The segment covering 11 to 21 (RNEHEDGGDEA) has biased composition (basic and acidic residues). The region spanning 140–412 (LKLSGVRTNE…FEECGFQCPE (273 aa)) is the ABC transporter 1 domain. 172–179 (GPPGCGKT) is an ATP binding site. Residues 490-702 (ELFRACISRE…AEIGLSVNEF (213 aa)) enclose the ABC transmembrane type-2 1 domain. The next 6 membrane-spanning stretches (helical) occupy residues 509–529 (VYLFKTFQLVLAAIITMTVFI), 546–566 (CLFFATVVLLVDGIPELSMTV), 580–600 (FYPAWAYAIPATVLKIPLSFF), 626–646 (FMILFAVHFTSISMFRCIAAI), 652–672 (AAMTAGSFVMLITFVFAGFAI), and 738–758 (LSALLGLTIIFNTIFTLALSF). The ABC transporter 2 domain occupies 813–1065 (ITFQDLNYYV…CVIEYFQNIP (253 aa)). 858–865 (GISGAGKT) lines the ATP pocket. The ABC transmembrane type-2 2 domain maps to 1138–1352 (EQFKSCLWKM…TLNLFFSSQY (215 aa)). Transmembrane regions (helical) follow at residues 1157–1177 (YNLMRIGHTFISSFIFGLLFW), 1189–1209 (LFTVLGAIYGLVLFVGINNCT), 1245–1265 (IPYIFIQSAEFVIVIYPMIGF), 1276–1296 (LYAMFCNLLCFNYLAMFLISI), 1302–1322 (VAAILQSLFFTTFNIFAGFLI), 1330–1350 (WWVWFYYITPTSWTLNLFFSS), and 1385–1405 (ITAIILIAFPIALATMYAFFV).

Belongs to the ABC transporter superfamily. ABCG family. PDR (TC 3.A.1.205) subfamily. Expressed in roots and stems.

It is found in the membrane. Its function is as follows. May be a general defense protein. This chain is ABC transporter G family member 33 (ABCG33), found in Arabidopsis thaliana (Mouse-ear cress).